We begin with the raw amino-acid sequence, 188 residues long: Elongation factor P-like protein (188 aa).

Belongs to the elongation factor P family.

In Xanthomonas campestris pv. campestris (strain 8004), this protein is Elongation factor P-like protein.